A 173-amino-acid polypeptide reads, in one-letter code: Calcium-binding protein 5 (173 aa).

EF-hand domains are found at residues 28–63 (DEIEELREAFLEFDKDRDGFISCKDLGNLMRTMGYM), 82–99 (GRVDFDDFVELMTPKLLA), 105–140 (IGVQEMRDAFKEFDTNGDGEITLVELQQAMQRLLGE), and 142–173 (LTPREISEVVREADVNGDGTVDFEEFVKMMSR). Residues Asp-41, Asp-43, Asp-45, and Asp-52 each coordinate Ca(2+). Ca(2+) contacts are provided by Asp-118, Asn-120, Asp-122, Glu-124, Glu-129, Asp-155, Asn-157, Asp-159, Thr-161, and Glu-166.

As to quaternary structure, interacts with CACNA1C (via C-terminal CDB motif) in a calcium-dependent manner. Interacts with STXBP1. Interacts with MYO6. In terms of tissue distribution, retina.

The protein resides in the cytoplasm. Functionally, inhibits calcium-dependent inactivation of L-type calcium channel and shifts voltage dependence of activation to more depolarized membrane potentials. Involved in the transmission of light signals. May positively regulate neurotransmitter vesicle endocytosis and exocytosis in a salt-dependent manner. May play a role in the extension and network organization of neurites. This chain is Calcium-binding protein 5 (CABP5), found in Homo sapiens (Human).